We begin with the raw amino-acid sequence, 278 residues long: S-formylglutathione hydrolase YeiG (278 aa).

Residues S145, D223, and H256 each act as charge relay system in the active site.

This sequence belongs to the esterase D family.

It carries out the reaction S-formylglutathione + H2O = formate + glutathione + H(+). Functionally, serine hydrolase involved in the detoxification of formaldehyde. Hydrolyzes S-formylglutathione to glutathione and formate. In Shigella boydii serotype 4 (strain Sb227), this protein is S-formylglutathione hydrolase YeiG (yeiG).